Reading from the N-terminus, the 237-residue chain is Uridylate kinase (237 aa).

12-15 (KLSG) provides a ligand contact to ATP. The tract at residues 20–25 (GAEGFG) is involved in allosteric activation by GTP. Residue Gly54 participates in UMP binding. Residues Gly55 and Arg59 each coordinate ATP. UMP contacts are provided by residues Asp74 and 135 to 142 (TGSPFFTT). Residues Thr162, Tyr168, and Asp171 each coordinate ATP.

It belongs to the UMP kinase family. As to quaternary structure, homohexamer.

It is found in the cytoplasm. The catalysed reaction is UMP + ATP = UDP + ADP. It functions in the pathway pyrimidine metabolism; CTP biosynthesis via de novo pathway; UDP from UMP (UMPK route): step 1/1. Its activity is regulated as follows. Allosterically activated by GTP. Inhibited by UTP. Catalyzes the reversible phosphorylation of UMP to UDP. The chain is Uridylate kinase from Actinobacillus succinogenes (strain ATCC 55618 / DSM 22257 / CCUG 43843 / 130Z).